The following is a 436-amino-acid chain: MTNGNNNNLEFAELKIRGKMFKLPILKASIGKDVIDISRVSAEADCFTYDPGFMSTASCQSTITYIDGDKGILWHRGYDIKDLAEKSDFLEVAYLMIYGELPSSEQYHNFTTKIAHHALVNERLHYLFQTFCSSSHPMAIMLAAVGSLSAFYPDLLNFNETDYELTAIRMIAKIPTIAAMSYKYSIGQPFIYPDNSLDFTENFLHMMFATPCTKYKVNPIIKNALNKIFILHADHEQNASTSTVRIAGSSGANPFACISTGIASLWGPAHGGANEAVINMLKEIGSSENIPKYVAKAKDKNDPFRLMGFGHRVYKSYDPRAAVLKETCKEVLNELGQLENNPLLQIAIELEALALKDEYFIERKLYPNVDFYSGIIYKAMGIPSQMFTVLFAIARTVGWMAQWKEMHEDPEQKISRPRQLYTGYVHREYKCIVERK.

Residues histidine 311 and aspartate 370 contribute to the active site.

It belongs to the citrate synthase family.

The catalysed reaction is oxaloacetate + acetyl-CoA + H2O = citrate + CoA + H(+). Its pathway is carbohydrate metabolism; tricarboxylic acid cycle; isocitrate from oxaloacetate: step 1/2. This is Citrate synthase (gltA) from Rickettsia typhi (strain ATCC VR-144 / Wilmington).